The primary structure comprises 367 residues: DNA replication and repair protein RecF (367 aa).

30 to 37 is an ATP binding site; that stretch reads GANGSGKT.

This sequence belongs to the RecF family.

Its subcellular location is the cytoplasm. In terms of biological role, the RecF protein is involved in DNA metabolism; it is required for DNA replication and normal SOS inducibility. RecF binds preferentially to single-stranded, linear DNA. It also seems to bind ATP. The chain is DNA replication and repair protein RecF from Pseudomonas putida (strain W619).